A 37-amino-acid chain; its full sequence is Potassium channel toxin alpha-KTx 4.8 (37 aa).

2 cysteine pairs are disulfide-bonded: Cys13-Cys33 and Cys17-Cys35.

The protein belongs to the short scorpion toxin superfamily. Potassium channel inhibitor family. Alpha-KTx 04 subfamily. As to expression, expressed by the venom gland.

The protein localises to the secreted. Functionally, reversible blocker of voltage-gated potassium channel Kv1.2/KCNA2 (Kd=65 nM) and calcium-activated potassium channels KCa2.2/KCNN2 (Kd=575 nM) and KCa3.1/KCNN4 (Kd=59 nM). The protein is Potassium channel toxin alpha-KTx 4.8 of Centruroides margaritatus (Central American bark Scorpion).